The sequence spans 247 residues: Coproheme decarboxylase (247 aa).

Fe-coproporphyrin III contacts are provided by residues Arg-129, 143-147, His-170, Gln-183, and Ser-221; that span reads YPMDK. Tyr-143 is an active-site residue.

It belongs to the ChdC family. Type 1 subfamily. It depends on Fe-coproporphyrin III as a cofactor.

The catalysed reaction is Fe-coproporphyrin III + 2 H2O2 + 2 H(+) = heme b + 2 CO2 + 4 H2O. It carries out the reaction Fe-coproporphyrin III + H2O2 + H(+) = harderoheme III + CO2 + 2 H2O. It catalyses the reaction harderoheme III + H2O2 + H(+) = heme b + CO2 + 2 H2O. Its pathway is porphyrin-containing compound metabolism; protoheme biosynthesis. Involved in coproporphyrin-dependent heme b biosynthesis. Catalyzes the decarboxylation of Fe-coproporphyrin III (coproheme) to heme b (protoheme IX), the last step of the pathway. The reaction occurs in a stepwise manner with a three-propionate intermediate. In Bacillus cytotoxicus (strain DSM 22905 / CIP 110041 / 391-98 / NVH 391-98), this protein is Coproheme decarboxylase.